The sequence spans 89 residues: Small ribosomal subunit protein uS17 (89 aa).

Belongs to the universal ribosomal protein uS17 family. In terms of assembly, part of the 30S ribosomal subunit.

Functionally, one of the primary rRNA binding proteins, it binds specifically to the 5'-end of 16S ribosomal RNA. The sequence is that of Small ribosomal subunit protein uS17 from Coxiella burnetii (strain RSA 331 / Henzerling II).